We begin with the raw amino-acid sequence, 218 residues long: UPF0598 protein C8orf82 homolog (218 aa).

Belongs to the UPF0598 family.

The protein is UPF0598 protein C8orf82 homolog of Mus musculus (Mouse).